A 323-amino-acid polypeptide reads, in one-letter code: Aspartate carbamoyltransferase catalytic subunit (323 aa).

Carbamoyl phosphate contacts are provided by arginine 71 and threonine 72. Lysine 99 is an L-aspartate binding site. Arginine 121, histidine 151, and glutamine 154 together coordinate carbamoyl phosphate. 2 residues coordinate L-aspartate: arginine 184 and arginine 239. Carbamoyl phosphate is bound by residues glycine 280 and proline 281.

This sequence belongs to the aspartate/ornithine carbamoyltransferase superfamily. ATCase family. In terms of assembly, heterododecamer (2C3:3R2) of six catalytic PyrB chains organized as two trimers (C3), and six regulatory PyrI chains organized as three dimers (R2).

It catalyses the reaction carbamoyl phosphate + L-aspartate = N-carbamoyl-L-aspartate + phosphate + H(+). It participates in pyrimidine metabolism; UMP biosynthesis via de novo pathway; (S)-dihydroorotate from bicarbonate: step 2/3. Catalyzes the condensation of carbamoyl phosphate and aspartate to form carbamoyl aspartate and inorganic phosphate, the committed step in the de novo pyrimidine nucleotide biosynthesis pathway. The sequence is that of Aspartate carbamoyltransferase catalytic subunit from Ralstonia nicotianae (strain ATCC BAA-1114 / GMI1000) (Ralstonia solanacearum).